Reading from the N-terminus, the 486-residue chain is Intermediate cleaving peptidase 55 (486 aa).

The transit peptide at Met-1–Leu-19 directs the protein to the mitochondrion. Mn(2+) is bound by residues Asp-317, Asp-328, His-407, Glu-434, and Glu-457.

The protein belongs to the peptidase M24B family. It depends on Mn(2+) as a cofactor.

It localises to the mitochondrion inner membrane. The catalysed reaction is The enzyme cleaves the 36-Pro-Pro-37 bond of cysteine desulfurase (EC 2.8.1.7) removing three amino acid residues (Tyr-Ser-Pro) from the N-terminus after cleavage by mitochondrial processing peptidase.. Aminopeptidase which cleaves preprotein intermediates that carry destabilizing N-ter amino acid residues after the mitochondrial processing peptidase (MPP) cleavage site and is thus critical for stabilization of the mitochondrial proteome. This Schizosaccharomyces pombe (strain 972 / ATCC 24843) (Fission yeast) protein is Intermediate cleaving peptidase 55 (icp55).